A 232-amino-acid chain; its full sequence is MKNLCIIPARGGSKRIPRKNIIDFLGKPLIAYSIENALNSGIFDEIVLSSDDEEIIEVALKYGAKAPFVRDKNLSDDYASSTAAVQNAIEILQSQNQIYDHVCCLYATAPLLNKNILKQAYEKFIQNQSKFLFAATEFEYPIQRAFYLNENNQVYMFDEKHYKSRSQDLTKAYHDAGAFYFGTSKAWLEEDFIFKPHSSVFVLPRNLVCDIDTMQDLEFAKILYKVNHESAF.

The protein belongs to the CMP-NeuNAc synthase family. Requires Mg(2+) as cofactor.

The catalysed reaction is pseudaminate + CTP = CMP-pseudaminate + diphosphate. Functionally, catalyzes the final step in the biosynthesis of pseudaminic acid, a sialic-acid-like sugar that is used to modify flagellin. Mediates the activation of pseudaminic acid with CMP by forming CMP-pseudaminic acid. This is Pseudaminic acid cytidylyltransferase (pseF) from Campylobacter jejuni subsp. jejuni serotype O:23/36 (strain 81-176).